Consider the following 552-residue polypeptide: Oxygen-dependent choline dehydrogenase (552 aa).

Residue 7 to 36 (DYIIIGAGSAGNVLAARLTEDKDTTVLLLE) coordinates FAD. The active-site Proton acceptor is histidine 477.

This sequence belongs to the GMC oxidoreductase family. Requires FAD as cofactor.

The catalysed reaction is choline + A = betaine aldehyde + AH2. It carries out the reaction betaine aldehyde + NAD(+) + H2O = glycine betaine + NADH + 2 H(+). The protein operates within amine and polyamine biosynthesis; betaine biosynthesis via choline pathway; betaine aldehyde from choline (cytochrome c reductase route): step 1/1. Its function is as follows. Involved in the biosynthesis of the osmoprotectant glycine betaine. Catalyzes the oxidation of choline to betaine aldehyde and betaine aldehyde to glycine betaine at the same rate. The chain is Oxygen-dependent choline dehydrogenase from Acinetobacter baumannii (strain AB307-0294).